Consider the following 1036-residue polypeptide: Integrin alpha-9 (1036 aa).

A signal peptide spans 1-28; it reads MGGPAAARTGAGGLRALLLALVAAGVPA. The Extracellular portion of the chain corresponds to 29–981; that stretch reads GAYNLDAQRP…NLEPRGYVVG (953 aa). 7 FG-GAP repeats span residues 36–97, 109–175, 183–233, 234–290, 291–350, 352–409, and 412–475; these read QRPV…PDRR, RGAP…AKGK, EYKK…NTYF, KLND…SGTL, IKIF…GALE, QLTL…GIVP, and SMKL…LPGS. Disulfide bonds link Cys-88-Cys-98, Cys-143-Cys-163, and Cys-180-Cys-195. N-linked (GlcNAc...) asparagine glycosylation occurs at Asn-226. Residues Asp-313, Asn-315, Asp-317, Asp-321, Asp-374, Asp-376, Asp-378, Asp-382, Asp-436, Asp-438, Asn-440, and Asp-444 each coordinate Ca(2+). Cys-483 and Cys-492 are joined by a disulfide. N-linked (GlcNAc...) asparagine glycosylation is found at Asn-494 and Asn-515. Disulfide bonds link Cys-498–Cys-556, Cys-621–Cys-626, and Cys-697–Cys-707. A glycan (N-linked (GlcNAc...) asparagine) is linked at Asn-808. 2 disulfide bridges follow: Cys-856-Cys-892 and Cys-899-Cys-904. Residues 982–1002 form a helical membrane-spanning segment; the sequence is WIIAISLLVGILIFLLLAVLL. Topologically, residues 1003 to 1036 are cytoplasmic; that stretch reads WKMGFFRRRYKEIIEAEKNRKENEDGWDWVQKNQ. The GFFKR motif motif lies at 1006–1010; sequence GFFRR.

It belongs to the integrin alpha chain family. In terms of assembly, heterodimer of an alpha and a beta subunit. Alpha-9 (ITGA9) associates with beta-1 (ITGB1). Integrin ITGA9:ITGB1 interacts with FBLN5 (via N-terminus). Integrin ITGA9:ITGB1 interacts with SPP1/OPN (via N-terminus). Integrin ITGA9:ITGB1 interacts with TNC/TNFN3 (via the 3rd Fibronectin type-III domain). Integrin ITGA9:ITGB1 interacts with SVEP1/polydom (via Sushi domain 21); thereby inhibits Ca(2+) intracellular signaling and as a result represses vasocontraction. Expressed in the media layer of the arterial wall (at protein level). Expressed in the airway epithelium, skeletal muscle, basal keratincytes, the basal epithelium of the cornea, hepatocytes, giant cells in the spleen and smooth muscle of the stomach, duodenum and veins (at protein level).

Its subcellular location is the membrane. Functionally, integrin alpha-9/beta-1 (ITGA9:ITGB1) is a receptor for VCAM1, cytotactin and osteopontin. It recognizes the sequence A-E-I-D-G-I-E-L in cytotactin. ITGA9:ITGB1 may play a crucial role in SVEP1/polydom-mediated myoblast cell adhesion. Integrin ITGA9:ITGB1 represses PRKCA-mediated L-type voltage-gated channel Ca(2+) influx and ROCK-mediated calcium sensitivity in vascular smooth muscle cells via its interaction with SVEP1, thereby inhibiting vasocontraction. The chain is Integrin alpha-9 from Mus musculus (Mouse).